Consider the following 62-residue polypeptide: Small ribosomal subunit protein eS27 (62 aa).

Residues C17, C20, C36, and C39 each contribute to the Zn(2+) site. The segment at 17-39 (CPDCENEQTIFDRACTPVDCIVC) adopts a C4-type zinc-finger fold.

The protein belongs to the eukaryotic ribosomal protein eS27 family. As to quaternary structure, part of the 30S ribosomal subunit. Zn(2+) is required as a cofactor.

The protein is Small ribosomal subunit protein eS27 of Methanospirillum hungatei JF-1 (strain ATCC 27890 / DSM 864 / NBRC 100397 / JF-1).